The following is a 149-amino-acid chain: Deoxyuridine 5'-triphosphate nucleotidohydrolase (149 aa).

Substrate-binding positions include 68-70 (RSG), Asn-81, 85-87 (LID), and Met-95.

Belongs to the dUTPase family. Requires Mg(2+) as cofactor.

The enzyme catalyses dUTP + H2O = dUMP + diphosphate + H(+). The protein operates within pyrimidine metabolism; dUMP biosynthesis; dUMP from dCTP (dUTP route): step 2/2. Its function is as follows. This enzyme is involved in nucleotide metabolism: it produces dUMP, the immediate precursor of thymidine nucleotides and it decreases the intracellular concentration of dUTP so that uracil cannot be incorporated into DNA. The polypeptide is Deoxyuridine 5'-triphosphate nucleotidohydrolase (Herminiimonas arsenicoxydans).